A 249-amino-acid polypeptide reads, in one-letter code: Ubiquinone biosynthesis O-methyltransferase (249 aa).

A disordered region spans residues 1–23 (MTSPSQVLPASAGKPTGPNADPK). Positions 52, 71, 92, and 136 each coordinate S-adenosyl-L-methionine.

The protein belongs to the methyltransferase superfamily. UbiG/COQ3 family.

It carries out the reaction a 3-demethylubiquinol + S-adenosyl-L-methionine = a ubiquinol + S-adenosyl-L-homocysteine + H(+). The catalysed reaction is a 3-(all-trans-polyprenyl)benzene-1,2-diol + S-adenosyl-L-methionine = a 2-methoxy-6-(all-trans-polyprenyl)phenol + S-adenosyl-L-homocysteine + H(+). It participates in cofactor biosynthesis; ubiquinone biosynthesis. In terms of biological role, O-methyltransferase that catalyzes the 2 O-methylation steps in the ubiquinone biosynthetic pathway. In Cupriavidus pinatubonensis (strain JMP 134 / LMG 1197) (Cupriavidus necator (strain JMP 134)), this protein is Ubiquinone biosynthesis O-methyltransferase.